The following is a 195-amino-acid chain: Adenylate kinase (195 aa).

11–16 provides a ligand contact to ATP; it reads GAGKGT. The tract at residues 31–60 is NMP; sequence STGDIFRAAVRNQTPLGQQVQAYLDSGRLV. Residues Thr-32, Arg-37, 58–60, 86–89, and Gln-93 contribute to the AMP site; these read RLV and GFPR. Positions 127 to 137 are LID; the sequence is LRAEKESRKDD. An ATP-binding site is contributed by Arg-128. The AMP site is built by Arg-134 and Arg-145. Gln-173 is a binding site for ATP.

It belongs to the adenylate kinase family. In terms of assembly, monomer.

It is found in the cytoplasm. It carries out the reaction AMP + ATP = 2 ADP. It participates in purine metabolism; AMP biosynthesis via salvage pathway; AMP from ADP: step 1/1. Its function is as follows. Catalyzes the reversible transfer of the terminal phosphate group between ATP and AMP. Plays an important role in cellular energy homeostasis and in adenine nucleotide metabolism. This chain is Adenylate kinase, found in Cyanothece sp. (strain PCC 7425 / ATCC 29141).